We begin with the raw amino-acid sequence, 215 residues long: Pyrrolidone-carboxylate peptidase (215 aa).

Active-site residues include E80, C143, and H167.

Belongs to the peptidase C15 family. Homotetramer.

It is found in the cytoplasm. The enzyme catalyses Release of an N-terminal pyroglutamyl group from a polypeptide, the second amino acid generally not being Pro.. Its function is as follows. Removes 5-oxoproline from various penultimate amino acid residues except L-proline. The protein is Pyrrolidone-carboxylate peptidase of Yersinia pestis bv. Antiqua (strain Antiqua).